Here is a 252-residue protein sequence, read N- to C-terminus: Ribosomal RNA small subunit methyltransferase J (252 aa).

Residues 104 to 105 (RD), 120 to 121 (ER), 156 to 157 (SS), and Asp174 each bind S-adenosyl-L-methionine.

The protein belongs to the methyltransferase superfamily. RsmJ family.

It localises to the cytoplasm. The enzyme catalyses guanosine(1516) in 16S rRNA + S-adenosyl-L-methionine = N(2)-methylguanosine(1516) in 16S rRNA + S-adenosyl-L-homocysteine + H(+). Specifically methylates the guanosine in position 1516 of 16S rRNA. In Yersinia enterocolitica serotype O:8 / biotype 1B (strain NCTC 13174 / 8081), this protein is Ribosomal RNA small subunit methyltransferase J.